The following is a 902-amino-acid chain: AP-4 complex accessory subunit RUSC1 (902 aa).

4 disordered regions span residues 31-67 (ELQEGPLSTPPPPGDTGGKESRGPCSGTLVDANSNSP), 81-155 (LENR…PGTC), 189-227 (QDVPSPGLEEEDERAEQDLPTSELLEADDGKIDAGKTEP), and 247-450 (KTTE…AQAG). Residues 94 to 112 (AASPSDPGCSSSLSSCSDL) are compositionally biased toward low complexity. Positions 249–261 (TENNNTGWKNNGN) are enriched in low complexity. Over residues 277-289 (WKTNTRITDSGSK) the composition is skewed to polar residues. The span at 291–309 (DAGKIDGGWRSDVSEEPVP) shows a compositional bias: basic and acidic residues. Pro residues-rich tracts occupy residues 381–390 (PAPPVPPRDP) and 398–407 (PPRPPPPPVP). Over residues 433-450 (PAAGEEAPAAKEPGAQAG) the composition is skewed to low complexity. The interval 470–605 (MAEAQSGTGQ…FHAFILGLLN (136 aa)) is interaction with TRAF6. An RUN domain is found at 522–666 (DVGHLVLTTL…LTFHLDLLFE (145 aa)). Residues 606–672 (TKQLELWFSS…LLFEHHHHLP (67 aa)) form an interaction with IKBKG region. 2 disordered regions span residues 706 to 729 (LRGTSKEAASDPSDSPNLPTPGSW) and 747 to 776 (GFPLSRWAPGRHGTAAEEGAQERPLPTDEM). In terms of domain architecture, SH3 spans 844–902 (QTHRAVRALCDHTAARPDQLSFRRGEVLRVITTVDEDWLRCGRDGMEGLVPVGYTSLVL).

In terms of assembly, associated component of the adapter-like complex 4 (AP-4). Interacts with IKBKG and TRAF6. Interacts with F-actin, acetylated actin, TUBB3, STX1A, KIF5B and KLC1. In terms of processing, phosphorylated on serine residues following nuclear translocation. Post-translationally, polyubiquitinated; polyubiquitination involves TRAF6. Predominantly expressed in brain.

It localises to the cytoplasm. The protein localises to the nucleus. It is found in the cytoskeleton. The protein resides in the cytoplasmic vesicle. Its subcellular location is the early endosome. It localises to the postsynaptic density. The protein localises to the golgi apparatus. In terms of biological role, associates with the adapter-like complex 4 (AP-4) and may therefore play a role in vesicular trafficking of proteins at the trans-Golgi network. Signaling adapter which plays a role in neuronal differentiation. Involved in regulation of NGF-dependent neurite outgrowth. May play a role in neuronal vesicular trafficking, specifically involving pre-synaptic membrane proteins. Seems to be involved in signaling pathways that are regulated by the prolonged activation of MAPK. Can regulate the polyubiquitination of IKBKG and thus may be involved in regulation of the NF-kappa-B pathway. This is AP-4 complex accessory subunit RUSC1 from Homo sapiens (Human).